We begin with the raw amino-acid sequence, 397 residues long: Serpin B10 (397 aa).

The Nuclear localization signal signature appears at 74 to 77 (KKRK).

Belongs to the serpin family. Ov-serpin subfamily.

The protein resides in the nucleus. It is found in the cytoplasm. Protease inhibitor that may play a role in the regulation of protease activities during hematopoiesis and apoptosis induced by TNF. May regulate protease activities in the cytoplasm and in the nucleus. The sequence is that of Serpin B10 (SERPINB10) from Rhinolophus ferrumequinum (Greater horseshoe bat).